Consider the following 343-residue polypeptide: Putative MO25-like protein At4g17270 (343 aa).

This sequence belongs to the Mo25 family.

The protein is Putative MO25-like protein At4g17270 of Arabidopsis thaliana (Mouse-ear cress).